The following is a 549-amino-acid chain: Sorting nexin-33 (549 aa).

Residues 1–61 enclose the SH3 domain; that stretch reads MALKARALYS…PASYVEILRP (61 aa). Residues 66-83 show a composition bias toward polar residues; it reads VQVDYSGHTQGYTDSPHQ. The tract at residues 66-137 is disordered; sequence VQVDYSGHTQ…RPEYTHRPRP (72 aa). Positions 86 to 101 are enriched in acidic residues; sequence YDDDEEDDDDWDDWDD. Polar residues predominate over residues 110 to 119; sequence SGSNGVSRSQ. Positions 127–137 are enriched in basic and acidic residues; that stretch reads PRPEYTHRPRP. The region spanning 205–315 is the PX domain; it reads FSCSVEEPTK…HFLSCQDEKQ (111 aa). The 204-residue stretch at 346–549 folds into the BAR domain; the sequence is LQDVEERVDV…EKTLHMYDDL (204 aa).

Belongs to the sorting nexin family.

It is found in the cytoplasm. It localises to the cytosol. The protein resides in the membrane. The protein localises to the cytoplasmic vesicle membrane. Functionally, plays a role in the reorganization of the cytoskeleton, endocytosis and cellular vesicle trafficking, both during interphase and at the end of mitotic cell divisions. Required for efficient progress through mitosis and cytokinesis. Required for normal formation of the cleavage furrow at the end of mitosis. Modulates endocytosis of cell-surface proteins. Promotes membrane tubulation (in vitro). May promote the formation of macropinosomes. The sequence is that of Sorting nexin-33 (snx33) from Xenopus tropicalis (Western clawed frog).